The sequence spans 310 residues: p-hydroxybenzoic acid efflux pump subunit AaeA (310 aa).

A helical membrane pass occupies residues 12–32 (AITVVLVILAFIAIFNAWVYY).

It belongs to the membrane fusion protein (MFP) (TC 8.A.1) family.

Its subcellular location is the cell inner membrane. Its function is as follows. Forms an efflux pump with AaeB. In Shigella flexneri, this protein is p-hydroxybenzoic acid efflux pump subunit AaeA.